The sequence spans 92 residues: MGRSLKKGPFCDEHLMKKIEKLNATGQKQVIKTWSRRSTIFPQFVGHTIAVYDGRKHVPVYITEDMVGHKLGEFAPTRTFRGHAGDDKKTKR.

It belongs to the universal ribosomal protein uS19 family.

Its function is as follows. Protein S19 forms a complex with S13 that binds strongly to the 16S ribosomal RNA. The polypeptide is Small ribosomal subunit protein uS19 (Geobacillus kaustophilus (strain HTA426)).